A 300-amino-acid chain; its full sequence is tRNA dimethylallyltransferase (300 aa).

ATP is bound at residue Gly9–Ser16. Position 11–16 (Thr11–Ser16) interacts with substrate. Positions Asp34–Cys37 are interaction with substrate tRNA.

It belongs to the IPP transferase family. As to quaternary structure, monomer. The cofactor is Mg(2+).

It carries out the reaction adenosine(37) in tRNA + dimethylallyl diphosphate = N(6)-dimethylallyladenosine(37) in tRNA + diphosphate. Functionally, catalyzes the transfer of a dimethylallyl group onto the adenine at position 37 in tRNAs that read codons beginning with uridine, leading to the formation of N6-(dimethylallyl)adenosine (i(6)A). The sequence is that of tRNA dimethylallyltransferase from Campylobacter fetus subsp. fetus (strain 82-40).